The following is a 339-amino-acid chain: Biotin synthase (339 aa).

One can recognise a Radical SAM core domain in the interval 55-282 (NAVQLSTLLS…KAVVRLSAGR (228 aa)). The [4Fe-4S] cluster site is built by cysteine 70, cysteine 74, and cysteine 77. Residues cysteine 114, cysteine 145, cysteine 205, and arginine 277 each coordinate [2Fe-2S] cluster.

It belongs to the radical SAM superfamily. Biotin synthase family. Homodimer. [4Fe-4S] cluster is required as a cofactor. [2Fe-2S] cluster serves as cofactor.

It carries out the reaction (4R,5S)-dethiobiotin + (sulfur carrier)-SH + 2 reduced [2Fe-2S]-[ferredoxin] + 2 S-adenosyl-L-methionine = (sulfur carrier)-H + biotin + 2 5'-deoxyadenosine + 2 L-methionine + 2 oxidized [2Fe-2S]-[ferredoxin]. Its pathway is cofactor biosynthesis; biotin biosynthesis; biotin from 7,8-diaminononanoate: step 2/2. In terms of biological role, catalyzes the conversion of dethiobiotin (DTB) to biotin by the insertion of a sulfur atom into dethiobiotin via a radical-based mechanism. The protein is Biotin synthase of Burkholderia ambifaria (strain ATCC BAA-244 / DSM 16087 / CCUG 44356 / LMG 19182 / AMMD) (Burkholderia cepacia (strain AMMD)).